Here is a 246-residue protein sequence, read N- to C-terminus: 1-(5-phosphoribosyl)-5-[(5-phosphoribosylamino)methylideneamino] imidazole-4-carboxamide isomerase (246 aa).

The Proton acceptor role is filled by Asp-7. Asp-129 serves as the catalytic Proton donor.

This sequence belongs to the HisA/HisF family.

It localises to the cytoplasm. It carries out the reaction 1-(5-phospho-beta-D-ribosyl)-5-[(5-phospho-beta-D-ribosylamino)methylideneamino]imidazole-4-carboxamide = 5-[(5-phospho-1-deoxy-D-ribulos-1-ylimino)methylamino]-1-(5-phospho-beta-D-ribosyl)imidazole-4-carboxamide. It participates in amino-acid biosynthesis; L-histidine biosynthesis; L-histidine from 5-phospho-alpha-D-ribose 1-diphosphate: step 4/9. The sequence is that of 1-(5-phosphoribosyl)-5-[(5-phosphoribosylamino)methylideneamino] imidazole-4-carboxamide isomerase from Buchnera aphidicola subsp. Acyrthosiphon pisum (strain 5A).